The sequence spans 327 residues: Homeotic protein distal-less (327 aa).

The homeobox DNA-binding region spans 124–183 (MRKPRTIYSSLQLQQLNRRFQRTQYLALPERAELAASLGLTQTQVKIWFQNRRSKYKKMM). A disordered region spans residues 181-303 (KMMKAAQGPG…THHHNPPPQM (123 aa)). The segment covering 231-249 (LPPGHSPTPSSTPVSELSP) has biased composition (low complexity). Residues 266-275 (QKPHWIDHKP) show a composition bias toward basic and acidic residues. Pro residues predominate over residues 276–286 (PPQMTPQPPHP).

In terms of tissue distribution, expressed in the embryo in limb primordia of the head and thoracic segments. Expressed in regions of the larval leg, wing, antennal and haltere disks that form the distal-most regions of the mature structures (in the leg this corresponds to the tarsus and the distal tibia). Found in the optic center of the developing larval brain.

It localises to the nucleus. Its function is as follows. Transcription factor that plays a role in larval and adult appendage development. Specifies the identity of ventral appendages (including legs and antennae) and suppresses dorsal appendage development. Involved in patterning the distal-proximal limb axis. May control the adhesive properties of cells during limb morphogenesis. Also has a secondary role in the normal patterning of the wing margin. This is Homeotic protein distal-less (Dll) from Drosophila melanogaster (Fruit fly).